Here is a 118-residue protein sequence, read N- to C-terminus: MSRRVGEAGEQAAAEFLTASGYRIIARNVRFRSGEIDLIAQDGGVLVFVEVKTRRGRRYGTPGEAVTAAKQRRLARLASLYLARLGSEPPPCRFDVVEVEPGPDGRLRCRLIQNAFHA.

The protein belongs to the UPF0102 family.

The chain is UPF0102 protein STH1475 from Symbiobacterium thermophilum (strain DSM 24528 / JCM 14929 / IAM 14863 / T).